A 425-amino-acid chain; its full sequence is Type II secretion system protein L (425 aa).

At M1–P273 the chain is on the cytoplasmic side. Residues W274–A290 form a helical membrane-spanning segment. At D291–Q425 the chain is on the periplasmic side.

It belongs to the GSP L family. In terms of assembly, type II secretion system is composed of four main components: the outer membrane complex, the inner membrane complex, the cytoplasmic secretion ATPase and the periplasm-spanning pseudopilus. Forms homodimers. Interacts with OutM/GspM. Interacts with OutE/GspE and OutF/GspF.

Its subcellular location is the cell inner membrane. Functionally, inner membrane component of the type II secretion system required for the energy-dependent secretion of extracellular factors such as proteases and toxins from the periplasm. Plays a role in the complex assembly and recruits OutM resulting in a stable complex in the inner membrane. Provides thus a link between the energy-providing OutE protein in the cytoplasm and the rest of the T2SS machinery. The chain is Type II secretion system protein L (outL) from Pectobacterium carotovorum subsp. carotovorum (Erwinia carotovora subsp. carotovora).